The following is a 716-amino-acid chain: Ubiquitin thioesterase zranb1-B (716 aa).

2 consecutive RanBP2-type zinc fingers follow at residues 3-33 (DLGLKWSCEYCTYENWPSAIKCTMCRAQRHN) and 82-111 (TSSKWSCHMCTYLNWPRAIRCTQCLSQRQQ). Zn(2+) contacts are provided by Cys-10, Cys-13, Cys-24, Cys-27, Cys-88, Cys-91, Cys-102, and Cys-105. The tract at residues 113–143 (SQQHSPLSPSETPQTSGSRPSPVTSDPCEEY) is disordered. Residues 118–136 (PLSPSETPQTSGSRPSPVT) are compositionally biased toward polar residues. The segment at 152-181 (HAQRWPCSACTYENWPKSLRCVVCDHPKPS) adopts a RanBP2-type 3 zinc-finger fold. Residues Cys-158, Cys-161, Cys-172, and Cys-175 each contribute to the Zn(2+) site. Residues 178-228 (PKPSGSPETPQQDSEAESATSPSIVNEQERENVRTAGGGGGGSRGRLRKLS) form a disordered region. The span at 183–203 (SPETPQQDSEAESATSPSIVN) shows a compositional bias: polar residues. ANK repeat units follow at residues 268–298 (RRSDWLFLNACAGVVEGDLAAVEAYKSSGGD) and 321–348 (FTLVHLAIRFQRQDMLAVLLTEVSQQTA). Positions 440-600 (LYALWNRTAG…RGHFSALVAM (161 aa)) constitute an OTU domain. Cys-451 (nucleophile) is an active-site residue. His-593 functions as the Proton acceptor in the catalytic mechanism.

It belongs to the peptidase C64 family.

It localises to the cytoplasm. Its subcellular location is the nucleus. It carries out the reaction Thiol-dependent hydrolysis of ester, thioester, amide, peptide and isopeptide bonds formed by the C-terminal Gly of ubiquitin (a 76-residue protein attached to proteins as an intracellular targeting signal).. Functionally, ubiquitin thioesterase, which specifically hydrolyzes 'Lys-29'-linked and 'Lys-33'-linked diubiquitin. Also cleaves 'Lys-63'-linked chains, but with 40-fold less efficiency compared to 'Lys-29'-linked ones. Positive regulator of the Wnt signaling pathway that deubiquitinates apc protein, a negative regulator of Wnt-mediated transcription. Acts as a regulator of autophagy by mediating deubiquitination of pik3c3/vps34, thereby promoting autophagosome maturation. Plays a role in the regulation of cell morphology and cytoskeletal organization. Required in the stress fiber dynamics and cell migration. The sequence is that of Ubiquitin thioesterase zranb1-B (zranb1b) from Danio rerio (Zebrafish).